A 208-amino-acid chain; its full sequence is Small ribosomal subunit protein uS4 (208 aa).

Residues 32 to 53 (LNRKRGKNSPGQHGASKVKMSD) form a disordered region. One can recognise an S4 RNA-binding domain in the interval 99-161 (LRLDNVVYRL…YKSNVIIKKL (63 aa)).

It belongs to the universal ribosomal protein uS4 family. In terms of assembly, part of the 30S ribosomal subunit. Contacts protein S5. The interaction surface between S4 and S5 is involved in control of translational fidelity.

One of the primary rRNA binding proteins, it binds directly to 16S rRNA where it nucleates assembly of the body of the 30S subunit. Its function is as follows. With S5 and S12 plays an important role in translational accuracy. This chain is Small ribosomal subunit protein uS4, found in Endomicrobium trichonymphae.